We begin with the raw amino-acid sequence, 105 residues long: Large ribosomal subunit protein bL21 (105 aa).

This sequence belongs to the bacterial ribosomal protein bL21 family. As to quaternary structure, part of the 50S ribosomal subunit. Contacts protein L20.

This protein binds to 23S rRNA in the presence of protein L20. In Rhizobium etli (strain ATCC 51251 / DSM 11541 / JCM 21823 / NBRC 15573 / CFN 42), this protein is Large ribosomal subunit protein bL21.